Reading from the N-terminus, the 575-residue chain is Centrosomal protein POC5 (575 aa).

The tract at residues 1–26 (MSSDEEKYSLPVVQNDSSRGSSVSSN) is disordered. Residues Ser-105 and Ser-109 each carry the phosphoserine modification. The Centrin-binding (CBR) 1 repeat unit spans residues 142-173 (HEILVSDFLVSDENLQKMENVLDLWSSGLKTN). The stretch at 191–222 (MEMRKEKEKHAAHLKQLCNQINELKELQKTFE) forms a coiled coil. Centrin-binding (CBR) repeat units lie at residues 231–262 (VISS…HVRA) and 263–295 (RQDV…VQKQ). Positions 316–355 (SNDYEAKVAMLSGALENAKAEIQRMQHEKEHFEDSMKKAF) form a coiled coil. Disordered regions lie at residues 376–411 (AGID…MPLP) and 538–575 (KYPR…KVVD). A compositionally biased stretch (basic and acidic residues) spans 382–400 (NNKKEEYGPGVQGKEHSAH). Lys-538 is modified (N6-acetyllysine). Positions 545–569 (PESSTSASRSLGTRSAHTQSLTSVH) are enriched in polar residues. Phosphoserine is present on Ser-564.

It belongs to the POC5 family. As to quaternary structure, interacts with CETN2 and CETN3. Forms a microtubule-associated complex with POC1B, CETN2 and FAM161A. Interacts with CCDC15. Hyperphosphorylated during recruitment to procentrioles in G2/M phase.

The protein localises to the cytoplasm. It is found in the cytoskeleton. It localises to the microtubule organizing center. Its subcellular location is the centrosome. The protein resides in the centriole. Functionally, essential for the assembly of the distal half of centrioles, required for centriole elongation. Acts as a negative regulator of centriole elongation. The protein is Centrosomal protein POC5 (POC5) of Homo sapiens (Human).